Here is a 394-residue protein sequence, read N- to C-terminus: ATP phosphoribosyltransferase regulatory subunit (394 aa).

The protein belongs to the class-II aminoacyl-tRNA synthetase family. HisZ subfamily. In terms of assembly, heteromultimer composed of HisG and HisZ subunits.

Its subcellular location is the cytoplasm. It functions in the pathway amino-acid biosynthesis; L-histidine biosynthesis; L-histidine from 5-phospho-alpha-D-ribose 1-diphosphate: step 1/9. Its function is as follows. Required for the first step of histidine biosynthesis. May allow the feedback regulation of ATP phosphoribosyltransferase activity by histidine. The polypeptide is ATP phosphoribosyltransferase regulatory subunit (Geobacillus thermodenitrificans (strain NG80-2)).